We begin with the raw amino-acid sequence, 103 residues long: Vesicle-associated membrane protein 3 (103 aa).

Positions Met-1 to Gln-25 are disordered. Over Met-1–Lys-81 the chain is Cytoplasmic. In terms of domain architecture, v-SNARE coiled-coil homology spans Arg-18–Lys-78. Residues Lys-70, Lys-72, and Lys-81 each participate in a glycyl lysine isopeptide (Lys-Gly) (interchain with G-Cter in ubiquitin) cross-link. Residues Met-82–Val-102 form a helical; Anchor for type IV membrane protein membrane-spanning segment. A topological domain (vesicular) is located at residue Ser-103.

This sequence belongs to the synaptobrevin family. Interacts with POPDC1 (via the C-terminus cytoplasmic tail). Interacts with BCAP31; involved in VAMP3 export from the endoplasmic reticulum. Interacts with BAIAP3; this interaction is increased in the presence of calcium. Interacts with PICALM. Ubiquitinated by RNF167 at Lys-70, Lys-72 and Lys-81, regulating the recycling endosome pathway. In terms of processing, (Microbial infection) Targeted and hydrolyzed by C.botulinum neurotoxin type D (BoNT/D, botD) which hydrolyzes the 46-Lys-|-Leu-47 bond and probably inhibits neurotransmitter release. Post-translationally, (Microbial infection) Targeted and hydrolyzed by C.botulinum neurotoxin type F (BoNT/F, botF) which hydrolyzes the 45-Gln-|-Lys-46 bond and probably inhibits neurotransmitter release. (Microbial infection) Targeted and hydrolyzed by C.tetani toxin (tetX) which hydrolyzes the 63-Gln-|-Phe-64 bond and probably inhibits neurotransmitter release. In terms of tissue distribution, ubiquitous.

It is found in the early endosome membrane. The protein resides in the recycling endosome membrane. It localises to the synapse. The protein localises to the synaptosome. Its function is as follows. SNARE involved in vesicular transport from the late endosomes to the trans-Golgi network. This chain is Vesicle-associated membrane protein 3 (Vamp3), found in Rattus norvegicus (Rat).